Consider the following 204-residue polypeptide: Gellan lyase (204 aa).

In terms of assembly, multimer.

Its subcellular location is the secreted. It catalyses the reaction Eliminative cleavage of beta-D-glucopyranosyl-(1-&gt;4)-beta-D-glucopyranosyluronate bonds of gellan backbone releasing tetrasaccharides containing a 4-deoxy-4,5-unsaturated D-glucopyranosyluronic acid at the non-reducing end. The tetrasaccharide produced from deacetylated gellan is beta-D-4-deoxy-Delta(4)-GlcAp-(1-&gt;4)-beta-D-Glcp-(1-&gt;4)-alpha-L-Rhap-(1-&gt;3)-beta-D-Glcp.. With respect to regulation, activity is stimulated by zinc, potassium, lithium, cobalt, sodium, calcium, iron, manganase, magnesium and mercury ions at a concentration of 1 mM, but inhibited by copper ions at a concentration of 1 mM. Activity is inhibited by potassium, sodium and magnesium ions at a concentration of 1 M. Activity is inhibited by urea, EDTA, dithiothreitol, p-CMB, PSF, natrium lauryl sulfate and N-bromosuccinimide. Cleaves the glycosidic bonds of gellan backbone and releases tetrasaccharide units of glucuronyl-glucosyl-rhamnosyl-glucose with unsaturated glucuronic acid at the non-reducing terminal. The enzyme is highly specific to the heteropolysaccharide gellan. This is Gellan lyase from Geobacillus stearothermophilus (Bacillus stearothermophilus).